Here is a 508-residue protein sequence, read N- to C-terminus: Lysine--tRNA ligase (508 aa).

Residues E403 and E410 each coordinate Mg(2+).

It belongs to the class-II aminoacyl-tRNA synthetase family. As to quaternary structure, homodimer. Mg(2+) is required as a cofactor.

Its subcellular location is the cytoplasm. It carries out the reaction tRNA(Lys) + L-lysine + ATP = L-lysyl-tRNA(Lys) + AMP + diphosphate. In Methanoculleus marisnigri (strain ATCC 35101 / DSM 1498 / JR1), this protein is Lysine--tRNA ligase.